The primary structure comprises 682 residues: RNA helicase NPH-II (682 aa).

Residues Phe-181 to His-354 enclose the Helicase ATP-binding domain. Gly-194–Thr-201 contributes to the ATP binding site. Positions Asp-303–His-306 match the DEXH box motif. The region spanning Asn-386–Leu-551 is the Helicase C-terminal domain.

Belongs to the DEAD box helicase family. DEAH subfamily. In terms of assembly, monomer.

The protein resides in the virion. It carries out the reaction ATP + H2O = ADP + phosphate + H(+). NTP-dependent helicase that catalyzes unidirectional unwinding of 3'tailed duplex RNAs and plays an important role during transcription of early mRNAs, presumably by preventing R-loop formation behind the elongating RNA polymerase. Might also play a role in the export of newly synthesized mRNA chains out of the core into the cytoplasm. Required for replication and propagation of viral particles. The protein is RNA helicase NPH-II (NPH2) of Vertebrata (FPV).